The chain runs to 516 residues: tRNA-2-methylthio-N(6)-dimethylallyladenosine synthase (516 aa).

An MTTase N-terminal domain is found at 17–133 (RSFEVRTFGC…LPSLLSRSEH (117 aa)). Residues Cys-26, Cys-62, Cys-96, Cys-170, Cys-174, and Cys-177 each coordinate [4Fe-4S] cluster. Positions 156-392 (RESAYAGWVS…LALQERISTE (237 aa)) constitute a Radical SAM core domain. One can recognise a TRAM domain in the interval 395–466 (AKLIGTEVEL…PFFLIADSGV (72 aa)). Disordered regions lie at residues 409–438 (SGGR…QGHV) and 492–516 (GLGL…GCGC). The segment covering 412-438 (RKNDKTQRMTGRSRDGRLVHFDPQGHV) has biased composition (basic and acidic residues).

Belongs to the methylthiotransferase family. MiaB subfamily. As to quaternary structure, monomer. [4Fe-4S] cluster serves as cofactor.

Its subcellular location is the cytoplasm. It carries out the reaction N(6)-dimethylallyladenosine(37) in tRNA + (sulfur carrier)-SH + AH2 + 2 S-adenosyl-L-methionine = 2-methylsulfanyl-N(6)-dimethylallyladenosine(37) in tRNA + (sulfur carrier)-H + 5'-deoxyadenosine + L-methionine + A + S-adenosyl-L-homocysteine + 2 H(+). Its function is as follows. Catalyzes the methylthiolation of N6-(dimethylallyl)adenosine (i(6)A), leading to the formation of 2-methylthio-N6-(dimethylallyl)adenosine (ms(2)i(6)A) at position 37 in tRNAs that read codons beginning with uridine. This is tRNA-2-methylthio-N(6)-dimethylallyladenosine synthase from Corynebacterium diphtheriae (strain ATCC 700971 / NCTC 13129 / Biotype gravis).